The chain runs to 504 residues: Hexose transporter 1 (504 aa).

Over 1 to 29 (MTKSSKDICSENEGKKNGKSGFFSTSFKY) the chain is Cytoplasmic. The chain crosses the membrane as a helical span at residues 30 to 50 (VLSACIASFIFGYQVSVLNTI). The Extracellular portion of the chain corresponds to 51–78 (KNFIVVEFEWCKGEKDRLNCSNNTIQSS). C61 and C70 form a disulfide bridge. A helical transmembrane segment spans residues 79-99 (FLLASVFIGAVLGCGFSGYLV). At 100 to 104 (QFGRR) the chain is on the cytoplasmic side. Residues 105–125 (LSLLIIYNFFFLVSILTSITH) traverse the membrane as a helical segment. The Extracellular portion of the chain corresponds to 126-129 (HFHT). A helical transmembrane segment spans residues 130–150 (ILFARLLSGFGIGLVTVSVPM). The Cytoplasmic segment spans residues 151–165 (YISEMTHKDKKGAYG). A helical transmembrane segment spans residues 166 to 186 (VMHQLFITFGIFVAVMLGLAM). Q169 contacts alpha-D-glucose. Position 169 (Q169) interacts with beta-D-glucose. Residues 187-207 (GEGPKADSTEPLTSFAKLWWR) lie on the Extracellular side of the membrane. A helical transmembrane segment spans residues 208-228 (LMFLFPSVISLIGILALVVFF). Over 229 to 293 (KEETPYFLFE…SALKIPSYRY (65 aa)) the chain is Cytoplasmic. A helical membrane pass occupies residues 294–314 (VIILGCLLSGLQQFTGINVLV). Alpha-D-glucose-binding residues include Q305, Q306, and N311. Q305 is a binding site for beta-D-glucose. Position 311 (N311) interacts with beta-D-glucose. The Extracellular segment spans residues 315–331 (SNSNELYKEFLDSHLIT). Residues 332–352 (ILSVVMTAVNFLMTFPAIYIV) traverse the membrane as a helical segment. N341 lines the beta-D-glucose pocket. Topologically, residues 353-358 (EKLGRK) are cytoplasmic. A helical membrane pass occupies residues 359–379 (TLLLWGCVGVLVAYLPTAIAN). At 380-392 (EINRNSNFVKILS) the chain is on the extracellular side. Residues 393-413 (IVATFVMIISFAVSYGPVLWI) form a helical membrane-spanning segment. An alpha-D-glucose-binding site is contributed by W412. The Cytoplasmic segment spans residues 414–429 (YLHEMFPSEIKDSAAS). Residues 430-450 (LASLVNWVCAIIVVFPSDIII) traverse the membrane as a helical segment. Residues 451–455 (KKSPS) lie on the Extracellular side of the membrane. Residues 456–476 (ILFIVFSVMSILTFFFIFFFI) traverse the membrane as a helical segment. Residues 477-504 (KETKGGEIGTSPYITMEERQKHMTKSVV) lie on the Cytoplasmic side of the membrane.

Belongs to the major facilitator superfamily. Sugar transporter (TC 2.A.1.1) family. In terms of assembly, homodimer.

Its subcellular location is the cell membrane. The catalysed reaction is D-glucose(out) = D-glucose(in). It catalyses the reaction D-fructose(out) = D-fructose(in). The enzyme catalyses D-galactose(in) = D-galactose(out). It carries out the reaction D-mannose(out) = D-mannose(in). The catalysed reaction is D-glucosamine(out) = D-glucosamine(in). It catalyses the reaction D-xylose(out) = D-xylose(in). Its activity is regulated as follows. Inhibited by cytochalasin B. Inhibited by compound 3361 (3-O-((undec-10-en)-1-yl)-D-glucose). Inhibited by compound HTI-1. Sodium-independent facilitative hexose transporter. Can transport D-glucose and D-fructose. Can transport D-mannose, D-galactose, D-xylose and D-glucosamine. This is Hexose transporter 1 from Plasmodium falciparum (isolate 3D7).